Here is a 260-residue protein sequence, read N- to C-terminus: Ras-related protein Rab-26 (260 aa).

The interval 1–56 (MSRKKTPKSKGGSEPATSTLPAAAAATNGPRLAHPRTVRPGPEAPPNGPPQSIRPS) is disordered. Ser76, Gly77, Val78, Gly79, Lys80, Thr81, Cys82, Ser99, and Thr100 together coordinate GTP. A Mg(2+)-binding site is contributed by Thr81. Short sequence motifs (switch) lie at residues 90 to 105 (GAFL…GIDF) and 123 to 140 (DTAG…YYRD). Mg(2+)-binding residues include Thr100 and Asp123. GTP-binding residues include Gly126, Asn181, Lys182, Asp184, Ala212, and Arg213. 2 S-geranylgeranyl cysteine lipidation sites follow: Cys257 and Cys258.

It belongs to the small GTPase superfamily. Rab family. In terms of assembly, interacts with ADRA2B. Interacts with RIMS1. Requires Mg(2+) as cofactor. As to expression, detected in zymogenic cells in the stomach.

The protein resides in the cytoplasmic vesicle. It localises to the secretory vesicle membrane. The protein localises to the golgi apparatus membrane. It catalyses the reaction GTP + H2O = GDP + phosphate + H(+). With respect to regulation, regulated by guanine nucleotide exchange factors (GEFs) which promote the exchange of bound GDP for free GTP. Regulated by GTPase activating proteins (GAPs) which increase the GTP hydrolysis activity. Inhibited by GDP dissociation inhibitors (GDIs). In terms of biological role, the small GTPases Rab are key regulators of intracellular membrane trafficking, from the formation of transport vesicles to their fusion with membranes. Rabs cycle between an inactive GDP-bound form and an active GTP-bound form that is able to recruit to membranes different set of downstream effectors directly responsible for vesicle formation, movement, tethering and fusion. RAB26 mediates transport of ADRA2A and ADRA2B from the Golgi to the cell membrane. Plays a role in the maturation of zymogenic granules and in pepsinogen secretion in the stomach. Plays a role in the secretion of amylase from acinar granules in the parotid gland. The protein is Ras-related protein Rab-26 of Mus musculus (Mouse).